A 201-amino-acid polypeptide reads, in one-letter code: Orotate phosphoribosyltransferase (201 aa).

A 5-phospho-alpha-D-ribose 1-diphosphate-binding site is contributed by 113 to 121; sequence EDIITTGKS. Thr117 and Arg145 together coordinate orotate.

The protein belongs to the purine/pyrimidine phosphoribosyltransferase family. PyrE subfamily. In terms of assembly, homodimer. Requires Mg(2+) as cofactor.

The enzyme catalyses orotidine 5'-phosphate + diphosphate = orotate + 5-phospho-alpha-D-ribose 1-diphosphate. It functions in the pathway pyrimidine metabolism; UMP biosynthesis via de novo pathway; UMP from orotate: step 1/2. Functionally, catalyzes the transfer of a ribosyl phosphate group from 5-phosphoribose 1-diphosphate to orotate, leading to the formation of orotidine monophosphate (OMP). The sequence is that of Orotate phosphoribosyltransferase from Helicobacter pylori (strain G27).